Here is a 486-residue protein sequence, read N- to C-terminus: Photosystem II CP43 reaction center protein (486 aa).

Positions 1-28 (MKVFVHGWQHKISHTRILYSLRRFYHVE) are excised as a propeptide. 5 helical membrane-spanning segments follow: residues 82–106 (LFEVAHFIPEKPLYEQGFILIPHLA), 147–168 (LIGPDTLEESFPFFGYDWRDKN), 191–213 (KALFFGGVYDTWAPGGGDVRLIN), 268–288 (KPFAWARRAFVWSGEAYLSYS), and 304–325 (WYNNTAYPSEFYGPTGPEASQA). Position 380 (Glu-380) interacts with [CaMn4O5] cluster. A helical transmembrane segment spans residues 460–484 (RARAAAAGFEKGINRENEAVLSMRP).

It belongs to the PsbB/PsbC family. PsbC subfamily. In terms of assembly, PSII is composed of 1 copy each of membrane proteins PsbA, PsbB, PsbC, PsbD, PsbE, PsbF, PsbH, PsbI, PsbJ, PsbK, PsbL, PsbM, PsbT, PsbX, PsbY, PsbZ, Psb30/Ycf12, at least 3 peripheral proteins of the oxygen-evolving complex and a large number of cofactors. It forms dimeric complexes. Binds multiple chlorophylls and provides some of the ligands for the Ca-4Mn-5O cluster of the oxygen-evolving complex. It may also provide a ligand for a Cl- that is required for oxygen evolution. PSII binds additional chlorophylls, carotenoids and specific lipids. serves as cofactor.

The protein localises to the plastid. It localises to the chloroplast thylakoid membrane. One of the components of the core complex of photosystem II (PSII). It binds chlorophyll and helps catalyze the primary light-induced photochemical processes of PSII. PSII is a light-driven water:plastoquinone oxidoreductase, using light energy to abstract electrons from H(2)O, generating O(2) and a proton gradient subsequently used for ATP formation. The protein is Photosystem II CP43 reaction center protein of Gracilaria tenuistipitata var. liui (Red alga).